A 20-amino-acid chain; its full sequence is Methyl-coenzyme M reductase subunit gamma (20 aa).

Residues 1-20 (AYERQFYPGATSVAENNIGH) form a disordered region.

It belongs to the methyl-coenzyme M reductase gamma subunit family. In terms of assembly, MCR from M.thermophila is a heterotrimer composed of an alpha, a beta, and a gamma subunit. Coenzyme F430 is required as a cofactor.

Its subcellular location is the cytoplasm. It catalyses the reaction coenzyme B + methyl-coenzyme M = methane + coenzyme M-coenzyme B heterodisulfide. Its pathway is one-carbon metabolism; methyl-coenzyme M reduction; methane from methyl-coenzyme M: step 1/1. Functionally, component of the methyl-coenzyme M reductase (MCR) I that catalyzes the reductive cleavage of methyl-coenzyme M (CoM-S-CH3 or 2-(methylthio)ethanesulfonate) using coenzyme B (CoB or 7-mercaptoheptanoylthreonine phosphate) as reductant which results in the production of methane and the mixed heterodisulfide of CoB and CoM (CoM-S-S-CoB). This is the final step in methanogenesis. The sequence is that of Methyl-coenzyme M reductase subunit gamma from Methanosarcina thermophila.